Reading from the N-terminus, the 215-residue chain is uncharacterized protein (215 aa).

Its subcellular location is the mitochondrion. This is an uncharacterized protein from Arabidopsis thaliana (Mouse-ear cress).